The chain runs to 226 residues: Choline transport system permease protein OpuBD (226 aa).

Residues 22–202 (FGRHFLMSAY…VMAVGADLLM (181 aa)) enclose the ABC transmembrane type-1 domain. A run of 5 helical transmembrane segments spans residues 27-47 (LMSA…GILI), 52-72 (RLSA…ALAM), 73-93 (LAVL…SLFL), 148-168 (ALVI…GGLG), and 182-202 (AIIL…DLLM).

Belongs to the binding-protein-dependent transport system permease family. CysTW subfamily.

The protein localises to the cell membrane. Involved in a high affinity multicomponent binding-protein-dependent transport system for choline; probably responsible for the translocation of the substrate across the membrane. This chain is Choline transport system permease protein OpuBD (opuBD), found in Bacillus subtilis (strain 168).